Here is a 155-residue protein sequence, read N- to C-terminus: Cytochrome c-550 (155 aa).

A signal peptide spans 1–20 (MKISIYATLAAITLALPAAA). The residue at position 21 (Gln-21) is a Pyrrolidone carboxylic acid. The heme c site is built by Cys-35, Cys-38, His-39, and Met-120. The propeptide occupies 150-155 (AEGESN).

Binds 1 heme c group covalently per subunit.

The protein is Cytochrome c-550 (cycA) of Paracoccus denitrificans.